Here is a 238-residue protein sequence, read N- to C-terminus: Dolichyldiphosphatase 1 (238 aa).

4 consecutive transmembrane segments (helical) span residues 33–53, 100–120, 130–150, and 162–182; these read LAYLSLSPVFVIVGFVTLIIF, PSSHSQFMWFFSVYSFLFLYL, FLDLLWRHVLSLGLLAVAFLV, and WSQVLYGGIAGGLMAIAWFIF.

It belongs to the dolichyldiphosphatase family.

It localises to the endoplasmic reticulum membrane. The catalysed reaction is a di-trans,poly-cis-dolichyl diphosphate + H2O = a di-trans,poly-cis-dolichyl phosphate + phosphate + H(+). It functions in the pathway protein modification; protein glycosylation. Functionally, required for efficient N-glycosylation. Necessary for maintaining optimal levels of dolichol-linked oligosaccharides. Hydrolyzes dolichyl pyrophosphate at a very high rate and dolichyl monophosphate at a much lower rate. Does not act on phosphatidate. This chain is Dolichyldiphosphatase 1 (DOLPP1), found in Homo sapiens (Human).